The primary structure comprises 68 residues: Large ribosomal subunit protein uL30 (68 aa).

Belongs to the universal ribosomal protein uL30 family. As to quaternary structure, part of the 50S ribosomal subunit.

This Bartonella quintana (strain Toulouse) (Rochalimaea quintana) protein is Large ribosomal subunit protein uL30.